The primary structure comprises 526 residues: Cytochrome P450 4e2 (526 aa).

Positions 307 and 444 each coordinate heme.

Belongs to the cytochrome P450 family. The cofactor is heme.

The protein resides in the endoplasmic reticulum membrane. The protein localises to the microsome membrane. Its function is as follows. May be involved in the metabolism of insect hormones and in the breakdown of synthetic insecticides. The sequence is that of Cytochrome P450 4e2 (Cyp4e2) from Drosophila melanogaster (Fruit fly).